We begin with the raw amino-acid sequence, 187 residues long: MSRPLKVVALSGGTWRPSRTLVLTQALLAELSGHLPIESHLIELGDIARPLGAALSRQELPAEIEAELQAIEQADLLIVAAPVYRGSYPGLLKHLFDLIDLNALIDTPVLLAATGGSERHALVLDHQLRPLFSFFQAVTLPIGVYATEADFADYQITSEPLKARIRLAAERAAPLFGTHLKPLLKIA.

It belongs to the SsuE family.

The catalysed reaction is FMNH2 + NAD(+) = FMN + NADH + 2 H(+). Functionally, involved in the dimethyl sulfide degradation pathway. Catalyzes the NADH-dependent reduction of FMN. The sequence is that of NADH-dependent FMN reductase SfnF from Pseudomonas fluorescens (strain Pf0-1).